Here is a 113-residue protein sequence, read N- to C-terminus: Hydrogenase maturation factor HypA (113 aa).

Residue histidine 2 participates in Ni(2+) binding. The Zn(2+) site is built by cysteine 73, cysteine 75, cysteine 89, and cysteine 92.

This sequence belongs to the HypA/HybF family.

Functionally, involved in the maturation of [NiFe] hydrogenases. Required for nickel insertion into the metal center of the hydrogenase. This Methanocella arvoryzae (strain DSM 22066 / NBRC 105507 / MRE50) protein is Hydrogenase maturation factor HypA.